The sequence spans 484 residues: tRNA sulfurtransferase (484 aa).

The THUMP domain occupies 56-158 (NCLKKALSKV…GNRAYFYTEV (103 aa)). ATP is bound by residues 176–177 (LV), K257, G279, and Q288. C336 and C444 are disulfide-bonded. The Rhodanese domain maps to 396 to 479 (APEGAVIVDL…TRNAVPPSSQ (84 aa)). Residue C444 is the Cysteine persulfide intermediate of the active site.

The protein belongs to the ThiI family.

It is found in the cytoplasm. The catalysed reaction is [ThiI sulfur-carrier protein]-S-sulfanyl-L-cysteine + a uridine in tRNA + 2 reduced [2Fe-2S]-[ferredoxin] + ATP + H(+) = [ThiI sulfur-carrier protein]-L-cysteine + a 4-thiouridine in tRNA + 2 oxidized [2Fe-2S]-[ferredoxin] + AMP + diphosphate. It carries out the reaction [ThiS sulfur-carrier protein]-C-terminal Gly-Gly-AMP + S-sulfanyl-L-cysteinyl-[cysteine desulfurase] + AH2 = [ThiS sulfur-carrier protein]-C-terminal-Gly-aminoethanethioate + L-cysteinyl-[cysteine desulfurase] + A + AMP + 2 H(+). The protein operates within cofactor biosynthesis; thiamine diphosphate biosynthesis. Functionally, catalyzes the ATP-dependent transfer of a sulfur to tRNA to produce 4-thiouridine in position 8 of tRNAs, which functions as a near-UV photosensor. Also catalyzes the transfer of sulfur to the sulfur carrier protein ThiS, forming ThiS-thiocarboxylate. This is a step in the synthesis of thiazole, in the thiamine biosynthesis pathway. The sulfur is donated as persulfide by IscS. The chain is tRNA sulfurtransferase from Pyrobaculum aerophilum (strain ATCC 51768 / DSM 7523 / JCM 9630 / CIP 104966 / NBRC 100827 / IM2).